The sequence spans 264 residues: 3-methyl-2-oxobutanoate hydroxymethyltransferase (264 aa).

Residues aspartate 45 and aspartate 84 each coordinate Mg(2+). 3-methyl-2-oxobutanoate-binding positions include 45-46, aspartate 84, and lysine 112; that span reads DS. Glutamate 114 serves as a coordination point for Mg(2+). Glutamate 181 serves as the catalytic Proton acceptor.

Belongs to the PanB family. As to quaternary structure, homodecamer; pentamer of dimers. The cofactor is Mg(2+).

It is found in the cytoplasm. The enzyme catalyses 3-methyl-2-oxobutanoate + (6R)-5,10-methylene-5,6,7,8-tetrahydrofolate + H2O = 2-dehydropantoate + (6S)-5,6,7,8-tetrahydrofolate. The protein operates within cofactor biosynthesis; (R)-pantothenate biosynthesis; (R)-pantoate from 3-methyl-2-oxobutanoate: step 1/2. Functionally, catalyzes the reversible reaction in which hydroxymethyl group from 5,10-methylenetetrahydrofolate is transferred onto alpha-ketoisovalerate to form ketopantoate. The polypeptide is 3-methyl-2-oxobutanoate hydroxymethyltransferase (Edwardsiella ictaluri (strain 93-146)).